The sequence spans 296 residues: Peroxidase P7 (296 aa).

Gln-1 is modified (pyrrolidone carboxylic acid). 4 disulfide bridges follow: Cys-11-Cys-91, Cys-44-Cys-49, Cys-97-Cys-292, and Cys-176-Cys-201. The active-site Proton acceptor is His-42. Ca(2+) contacts are provided by Asp-43, Val-46, Gly-48, Asp-50, and Ser-52. Substrate is bound at residue Pro-139. Residue His-169 coordinates heme b. Thr-170 is a Ca(2+) binding site. N-linked (GlcNAc...) asparagine glycosylation occurs at Asn-185. The Ca(2+) site is built by Asp-216, Ser-219, and Asp-224.

Belongs to the peroxidase family. Classical plant (class III) peroxidase subfamily. Requires Ca(2+) as cofactor. The cofactor is heme b.

The enzyme catalyses 2 a phenolic donor + H2O2 = 2 a phenolic radical donor + 2 H2O. In terms of biological role, removal of H(2)O(2), oxidation of toxic reductants, biosynthesis and degradation of lignin, suberization, auxin catabolism, response to environmental stresses such as wounding, pathogen attack and oxidative stress. These functions might be dependent on each isozyme/isoform in each plant tissue. The polypeptide is Peroxidase P7 (Brassica rapa subsp. rapa (Turnip)).